Reading from the N-terminus, the 380-residue chain is MGIQGLAKLIADVAPSAIRENDIKSYFGRKVAIDASMSIYQFLIAVRQGGDVLQNEEGETTSHLMGMFYRTIRMMENGIKPVYVFDGKPPQLKSGELAKRSERRAEAEKQLQQAQAAGAEQEVEKFTKRLVKVTKQHNDECKHLLSLMGIPYLDAPSEAEASCAALVKAGKVYAAATEDMDCLTFGSPVLMRHLTASEAKKLPIQEFHLSRILQELGLNQEQFVDLCILLGSDYCESIRGIGPKRAVDLIQKHKSIEEIVRRLDPNKYPVPENWLHKEAHQLFLEPEVLDPESVELKWSEPNEEELIKFMCGEKQFSEERIRSGVKRLSKSRQGSTQGRLDDFFKVTGSLSSAKRKEPEPKGSTKKKAKTGAAGKFKRGK.

An N-domain region spans residues Met1–Arg104. The residue at position 19 (Arg19) is a Symmetric dimethylarginine; by PRMT5. Mg(2+) is bound at residue Asp34. DNA contacts are provided by Arg47 and Arg70. Lys80 is subject to N6-acetyllysine. Asp86 contacts Mg(2+). Symmetric dimethylarginine; by PRMT5 occurs at positions 100 and 104. The I-domain stretch occupies residues Glu122 to His253. Mg(2+)-binding residues include Glu158, Glu160, Asp179, and Asp181. Glu158 is a binding site for DNA. Ser187 carries the post-translational modification Phosphoserine; by CDK2. Symmetric dimethylarginine; by PRMT5 is present on Arg192. Ser197 is modified (phosphoserine). Positions 231 and 233 each coordinate DNA. Residue Asp233 participates in Mg(2+) binding. Ser255, Ser293, and Ser335 each carry phosphoserine. The tract at residues Arg327–Lys380 is disordered. At Thr336 the chain carries Phosphothreonine. An interaction with PCNA region spans residues Thr336–Phe344. N6-acetyllysine is present on Lys354. Over residues Ser363 to Lys380 the composition is skewed to basic residues. Position 364 is a phosphothreonine (Thr364). 3 positions are modified to N6-acetyllysine: Lys375, Lys377, and Lys380.

This sequence belongs to the XPG/RAD2 endonuclease family. FEN1 subfamily. Interacts with PCNA. Three molecules of FEN1 bind to one PCNA trimer with each molecule binding to one PCNA monomer. PCNA stimulates the nuclease activity without altering cleavage specificity. The C-terminal domain binds EP300; can bind simultaneously to both PCNA and EP300. Interacts with DDX11; this interaction is direct and increases flap endonuclease activity of FEN1. Interacts with WDR4; regulating its endonuclease activity. Interacts with POLB. Requires Mg(2+) as cofactor. Post-translationally, acetylated by EP300. Acetylation inhibits both endonuclease and exonuclease activity. Acetylation also reduces DNA-binding activity but does not affect interaction with PCNA or EP300. Phosphorylation upon DNA damage induces relocalization to the nuclear plasma. Phosphorylation at Ser-187 by CDK2 occurs during late S-phase and results in dissociation from PCNA. In terms of processing, methylation at Arg-192 by PRMT5 impedes Ser-187 phosphorylation and increases interaction with PCNA.

The protein localises to the nucleus. It is found in the nucleolus. Its subcellular location is the nucleoplasm. It localises to the mitochondrion. Structure-specific nuclease with 5'-flap endonuclease and 5'-3' exonuclease activities involved in DNA replication and repair. During DNA replication, cleaves the 5'-overhanging flap structure that is generated by displacement synthesis when DNA polymerase encounters the 5'-end of a downstream Okazaki fragment. It enters the flap from the 5'-end and then tracks to cleave the flap base, leaving a nick for ligation. Also involved in the long patch base excision repair (LP-BER) pathway, by cleaving within the apurinic/apyrimidinic (AP) site-terminated flap. Acts as a genome stabilization factor that prevents flaps from equilibrating into structures that lead to duplications and deletions. Also possesses 5'-3' exonuclease activity on nicked or gapped double-stranded DNA, and exhibits RNase H activity. Also involved in replication and repair of rDNA and in repairing mitochondrial DNA. The protein is Flap endonuclease 1 of Homo sapiens (Human).